Here is a 265-residue protein sequence, read N- to C-terminus: Asparagine-rich protein (265 aa).

The N-terminal stretch at 1-21 is a signal peptide; it reads MSRLTLLVLLVIAAVIQKVHG. 2 disordered regions span residues 20 to 71 and 88 to 183; these read HGQG…NRNI and SNQN…NQQY. Basic and acidic residues-rich tracts occupy residues 22–35 and 44–55; these read QGRE…HEPG and EKTERNLREPNR. A compositionally biased stretch (low complexity) spans 88–98; sequence SNQNNFGNNRS. The segment covering 115 to 124 has biased composition (basic and acidic residues); that stretch reads NKSEVEKENG. Over residues 152-166 the composition is skewed to basic residues; that stretch reads KVQHRIAKRFQKRHP.

Nacreous layer of shell (at protein level). Expressed primarily in the mantle with highest level in the mantle pallium and lower level in the mantle edge.

It is found in the secreted. The protein is Asparagine-rich protein of Pinctada maxima (Silver-lipped pearl oyster).